A 360-amino-acid polypeptide reads, in one-letter code: Isopentenyl-diphosphate delta-isomerase (360 aa).

Arg-12 to Lys-13 is a substrate binding site. FMN is bound by residues Ser-69–Thr-71, Ser-99, and Asn-130. Ser-99–Arg-101 serves as a coordination point for substrate. Substrate is bound at residue Gln-164. Glu-165 contributes to the Mg(2+) binding site. Residues Lys-196, Thr-226, Gly-277 to Arg-279, and Ala-298 to Lys-299 each bind FMN.

The protein belongs to the IPP isomerase type 2 family. Homooctamer. Dimer of tetramers. It depends on FMN as a cofactor. Requires NADPH as cofactor. Mg(2+) is required as a cofactor.

Its subcellular location is the cytoplasm. The enzyme catalyses isopentenyl diphosphate = dimethylallyl diphosphate. Functionally, involved in the biosynthesis of isoprenoids. Catalyzes the 1,3-allylic rearrangement of the homoallylic substrate isopentenyl (IPP) to its allylic isomer, dimethylallyl diphosphate (DMAPP). This chain is Isopentenyl-diphosphate delta-isomerase, found in Halobacterium salinarum (strain ATCC 700922 / JCM 11081 / NRC-1) (Halobacterium halobium).